A 193-amino-acid polypeptide reads, in one-letter code: Ion-translocating oxidoreductase complex subunit A (193 aa).

6 helical membrane passes run 5–25, 47–67, 72–92, 102–122, 134–154, and 171–191; these read FFFILSNILIDNFILVKFLGL, FVVVVSTVLLWFVNFFILLPF, LRIIVYMLIISFGVQLIEIIL, ILGIFLPLITTNCAVLAIPLF, ILYAVSASFGFTLVMVIFSSI, and PIVLITVSLISIVFMGFKGLV.

The protein belongs to the NqrDE/RnfAE family. The complex is composed of six subunits: RnfA, RnfB, RnfC, RnfD, RnfE and RnfG.

It localises to the cell inner membrane. Its function is as follows. Part of a membrane-bound complex that couples electron transfer with translocation of ions across the membrane. The protein is Ion-translocating oxidoreductase complex subunit A of Buchnera aphidicola subsp. Schizaphis graminum (strain Sg).